Reading from the N-terminus, the 34-residue chain is Surfactant protein C (34 aa).

A lipid anchor (S-palmitoyl cysteine) is attached at C4.

It is found in the secreted. The protein localises to the extracellular space. The protein resides in the surface film. In terms of biological role, pulmonary surfactant associated proteins promote alveolar stability by lowering the surface tension at the air-liquid interface in the peripheral air spaces. The sequence is that of Surfactant protein C (SFTPC) from Canis lupus familiaris (Dog).